Reading from the N-terminus, the 170-residue chain is 3-hydroxydecanoyl-[acyl-carrier-protein] dehydratase (170 aa).

Residue histidine 71 is part of the active site.

It belongs to the thioester dehydratase family. FabA subfamily. As to quaternary structure, homodimer.

Its subcellular location is the cytoplasm. The catalysed reaction is a (3R)-hydroxyacyl-[ACP] = a (2E)-enoyl-[ACP] + H2O. It carries out the reaction (3R)-hydroxydecanoyl-[ACP] = (2E)-decenoyl-[ACP] + H2O. The enzyme catalyses (2E)-decenoyl-[ACP] = (3Z)-decenoyl-[ACP]. It participates in lipid metabolism; fatty acid biosynthesis. Necessary for the introduction of cis unsaturation into fatty acids. Catalyzes the dehydration of (3R)-3-hydroxydecanoyl-ACP to E-(2)-decenoyl-ACP and then its isomerization to Z-(3)-decenoyl-ACP. Can catalyze the dehydratase reaction for beta-hydroxyacyl-ACPs with saturated chain lengths up to 16:0, being most active on intermediate chain length. The sequence is that of 3-hydroxydecanoyl-[acyl-carrier-protein] dehydratase from Chelativorans sp. (strain BNC1).